Here is a 127-residue protein sequence, read N- to C-terminus: Ribosome-binding factor A (127 aa).

Belongs to the RbfA family. In terms of assembly, monomer. Binds 30S ribosomal subunits, but not 50S ribosomal subunits or 70S ribosomes.

Its subcellular location is the cytoplasm. Its function is as follows. One of several proteins that assist in the late maturation steps of the functional core of the 30S ribosomal subunit. Associates with free 30S ribosomal subunits (but not with 30S subunits that are part of 70S ribosomes or polysomes). Required for efficient processing of 16S rRNA. May interact with the 5'-terminal helix region of 16S rRNA. In Actinobacillus pleuropneumoniae serotype 7 (strain AP76), this protein is Ribosome-binding factor A.